Reading from the N-terminus, the 72-residue chain is Translation initiation factor IF-1 (72 aa).

One can recognise an S1-like domain in the interval 2-72; that stretch reads AKEDVIEIQG…TKGRITYRFK (71 aa).

The protein belongs to the IF-1 family. In terms of assembly, component of the 30S ribosomal translation pre-initiation complex which assembles on the 30S ribosome in the order IF-2 and IF-3, IF-1 and N-formylmethionyl-tRNA(fMet); mRNA recruitment can occur at any time during PIC assembly.

It is found in the cytoplasm. Functionally, one of the essential components for the initiation of protein synthesis. Stabilizes the binding of IF-2 and IF-3 on the 30S subunit to which N-formylmethionyl-tRNA(fMet) subsequently binds. Helps modulate mRNA selection, yielding the 30S pre-initiation complex (PIC). Upon addition of the 50S ribosomal subunit IF-1, IF-2 and IF-3 are released leaving the mature 70S translation initiation complex. The protein is Translation initiation factor IF-1 of Lactiplantibacillus plantarum (strain ATCC BAA-793 / NCIMB 8826 / WCFS1) (Lactobacillus plantarum).